The chain runs to 563 residues: Cysteine--tRNA ligase, chloroplastic/mitochondrial (563 aa).

Cys91 lines the Zn(2+) pocket. An L-cysteine-binding site is contributed by Gly92. The short motif at 93–103 is the 'HIGH' region element; sequence VTAYDLSHIGH. Thr131 contributes to the L-cysteine binding site. The short motif at 136–139 is the 'KIIK' region element; that stretch reads KIIA. Zn(2+) contacts are provided by Cys271, His296, and Glu300. His296 contacts L-cysteine. Residues 328–332 carry the 'KMSKS' region motif; that stretch reads KMSKS. Residue Lys331 participates in ATP binding.

This sequence belongs to the class-I aminoacyl-tRNA synthetase family. The cofactor is Zn(2+).

It is found in the plastid. Its subcellular location is the chloroplast. The protein resides in the mitochondrion. The catalysed reaction is tRNA(Cys) + L-cysteine + ATP = L-cysteinyl-tRNA(Cys) + AMP + diphosphate. Required for female gametophyte development. Is necessary for the fusion of central cell nuclei and programmed cell death (PCD) of the antipodals. The chain is Cysteine--tRNA ligase, chloroplastic/mitochondrial from Arabidopsis thaliana (Mouse-ear cress).